The sequence spans 535 residues: uncharacterized protein (535 aa).

A helical membrane pass occupies residues 8-24; sequence LVVFGSLVFFFGLVKYF. Lys50 participates in a covalent cross-link: Glycyl lysine isopeptide (Lys-Gly) (interchain with G-Cter in ubiquitin). Mn(2+)-binding residues include Asp316, Asp327, His412, Glu452, and Glu493.

Belongs to the peptidase M24B family. It depends on Mn(2+) as a cofactor.

The protein localises to the membrane. This is an uncharacterized protein from Saccharomyces cerevisiae (strain ATCC 204508 / S288c) (Baker's yeast).